The following is a 353-amino-acid chain: Photosystem II protein D1 (353 aa).

Residue threonine 2 is modified to N-acetylthreonine. Threonine 2 bears the Phosphothreonine mark. 3 helical membrane-spanning segments follow: residues 29-46 (YIGWFGVLMIPTLLTATS), 118-133 (HFLLGVACYMGREWEL), and 142-156 (WIAVAYSAPVAAATA). Histidine 118 contacts chlorophyll a. Pheophytin a is bound at residue tyrosine 126. Residues aspartate 170 and glutamate 189 each contribute to the [CaMn4O5] cluster site. The chain crosses the membrane as a helical span at residues 197–218 (FHMLGVAGVFGGSLFSAMHGSL). Histidine 198 is a binding site for chlorophyll a. Residues histidine 215 and 264–265 (SF) contribute to the a quinone site. Histidine 215 lines the Fe cation pocket. Histidine 272 provides a ligand contact to Fe cation. Residues 274–288 (FLAAWPVVGIWFTAL) traverse the membrane as a helical segment. [CaMn4O5] cluster contacts are provided by histidine 332, glutamate 333, aspartate 342, and alanine 344. Positions 345 to 353 (AVEVPSING) are excised as a propeptide.

It belongs to the reaction center PufL/M/PsbA/D family. As to quaternary structure, PSII is composed of 1 copy each of membrane proteins PsbA, PsbB, PsbC, PsbD, PsbE, PsbF, PsbH, PsbI, PsbJ, PsbK, PsbL, PsbM, PsbT, PsbX, PsbY, PsbZ, Psb30/Ycf12, at least 3 peripheral proteins of the oxygen-evolving complex and a large number of cofactors. It forms dimeric complexes. The D1/D2 heterodimer binds P680, chlorophylls that are the primary electron donor of PSII, and subsequent electron acceptors. It shares a non-heme iron and each subunit binds pheophytin, quinone, additional chlorophylls, carotenoids and lipids. D1 provides most of the ligands for the Mn4-Ca-O5 cluster of the oxygen-evolving complex (OEC). There is also a Cl(-1) ion associated with D1 and D2, which is required for oxygen evolution. The PSII complex binds additional chlorophylls, carotenoids and specific lipids. is required as a cofactor. Post-translationally, tyr-161 forms a radical intermediate that is referred to as redox-active TyrZ, YZ or Y-Z. C-terminally processed by CTPA; processing is essential to allow assembly of the oxygen-evolving complex and thus photosynthetic growth.

The protein localises to the plastid. It localises to the chloroplast thylakoid membrane. It carries out the reaction 2 a plastoquinone + 4 hnu + 2 H2O = 2 a plastoquinol + O2. Photosystem II (PSII) is a light-driven water:plastoquinone oxidoreductase that uses light energy to abstract electrons from H(2)O, generating O(2) and a proton gradient subsequently used for ATP formation. It consists of a core antenna complex that captures photons, and an electron transfer chain that converts photonic excitation into a charge separation. The D1/D2 (PsbA/PsbD) reaction center heterodimer binds P680, the primary electron donor of PSII as well as several subsequent electron acceptors. This Triticum aestivum (Wheat) protein is Photosystem II protein D1.